We begin with the raw amino-acid sequence, 504 residues long: 26S proteasome non-ATPase regulatory subunit 5 (504 aa).

The residue at position 2 (A2) is an N-acetylalanine.

The protein belongs to the proteasome subunit S5B/HSM3 family. Interacts with PSMC1, PSMC2, PSMD1 and PSMD6. Part of transient complex containing PSMD5, PSMC2, PSMC1 and PSMD2 formed during the assembly of the 26S proteasome.

Its function is as follows. Acts as a chaperone during the assembly of the 26S proteasome, specifically of the base subcomplex of the PA700/19S regulatory complex (RC). In the initial step of the base subcomplex assembly is part of an intermediate PSMD5:PSMC2:PSMC1:PSMD2 module which probably assembles with a PSMD10:PSMC4:PSMC5:PAAF1 module followed by dissociation of PSMD5. This Mus musculus (Mouse) protein is 26S proteasome non-ATPase regulatory subunit 5 (Psmd5).